Reading from the N-terminus, the 785-residue chain is Putative lipase C4A8.10 (785 aa).

Disordered stretches follow at residues 29 to 99 (HSAT…SSDF) and 115 to 140 (NTNA…VGTS). Positions 32–41 (TSSTTVPPTV) are enriched in low complexity. Over residues 47–58 (TKKESGSIEDRA) the composition is skewed to basic and acidic residues. Over residues 63-86 (MTISSGENISKQISENNSSTNPKH) the composition is skewed to polar residues. 2 stretches are compositionally biased toward low complexity: residues 89-99 (SESSPLLSSDF) and 127-140 (GVSH…VGTS). Ser-390 (charge relay system) is an active-site residue.

This sequence belongs to the putative lipase ROG1 family.

In Schizosaccharomyces pombe (strain 972 / ATCC 24843) (Fission yeast), this protein is Putative lipase C4A8.10.